The sequence spans 1460 residues: DNA-directed RNA polymerase III subunit RPC1 (1460 aa).

Zn(2+) contacts are provided by cysteine 67, cysteine 70, cysteine 77, histidine 80, cysteine 107, cysteine 110, and cysteine 154. Residues aspartate 511, aspartate 513, and aspartate 515 each contribute to the Mg(2+) site. Residues 858–870 are bridging helix; that stretch reads PPEFLFHAISGRE.

This sequence belongs to the RNA polymerase beta' chain family. In terms of assembly, component of the RNA polymerase III (Pol III) complex consisting of 17 subunits.

The protein resides in the nucleus. The catalysed reaction is RNA(n) + a ribonucleoside 5'-triphosphate = RNA(n+1) + diphosphate. In terms of biological role, DNA-dependent RNA polymerase catalyzes the transcription of DNA into RNA using the four ribonucleoside triphosphates as substrates. Largest and catalytic core component of RNA polymerase III which synthesizes small RNAs, such as 5S rRNA and tRNAs. Forms the polymerase active center together with the second largest subunit. A single-stranded DNA template strand of the promoter is positioned within the central active site cleft of Pol III. A bridging helix emanates from RPC1 and crosses the cleft near the catalytic site and is thought to promote translocation of Pol III by acting as a ratchet that moves the RNA-DNA hybrid through the active site by switching from straight to bent conformations at each step of nucleotide addition. The protein is DNA-directed RNA polymerase III subunit RPC1 (RPO31) of Saccharomyces cerevisiae (strain ATCC 204508 / S288c) (Baker's yeast).